The following is a 206-amino-acid chain: 3-isopropylmalate dehydratase small subunit (206 aa).

This sequence belongs to the LeuD family. LeuD type 1 subfamily. In terms of assembly, heterodimer of LeuC and LeuD.

The enzyme catalyses (2R,3S)-3-isopropylmalate = (2S)-2-isopropylmalate. It participates in amino-acid biosynthesis; L-leucine biosynthesis; L-leucine from 3-methyl-2-oxobutanoate: step 2/4. In terms of biological role, catalyzes the isomerization between 2-isopropylmalate and 3-isopropylmalate, via the formation of 2-isopropylmaleate. This chain is 3-isopropylmalate dehydratase small subunit, found in Acidobacterium capsulatum (strain ATCC 51196 / DSM 11244 / BCRC 80197 / JCM 7670 / NBRC 15755 / NCIMB 13165 / 161).